Here is a 489-residue protein sequence, read N- to C-terminus: Amino acid transporter AVT6E (489 aa).

The next 11 helical transmembrane spans lie at 76-96 (GIYGAVFNLTTSIIGAGIMAL), 102-122 (VLGLVLGFVLIILMALLSEIS), 156-176 (ICIIVNNGGVLVVYLIIMGDV), 201-221 (VLILIVMVIFLAPLCALNKID), 227-247 (SAASVALAVVFVVVCFVVATI), 269-289 (ILDLLVVIPIMSNAYVCHFNV), 310-330 (ITTAICVVVYASTAVSGYLLF), 357-377 (IVRIGYILHLVLVFPVIHFSL), 404-424 (VVLLALIYIGSTMIPNIWTAF), 425-445 (KFTGATSAVSLGFTFPALIAL), and 461-481 (VSWLMLILAVVVSIVGTIGNI).

It belongs to the amino acid/polyamine transporter 2 family. Amino acid/auxin permease (AAAP) (TC 2.A.18.6) subfamily.

The protein resides in the endoplasmic reticulum membrane. The protein localises to the vacuole membrane. The chain is Amino acid transporter AVT6E from Arabidopsis thaliana (Mouse-ear cress).